Consider the following 631-residue polypeptide: DNA mismatch repair protein MutL (631 aa).

It belongs to the DNA mismatch repair MutL/HexB family.

In terms of biological role, this protein is involved in the repair of mismatches in DNA. It is required for dam-dependent methyl-directed DNA mismatch repair. May act as a 'molecular matchmaker', a protein that promotes the formation of a stable complex between two or more DNA-binding proteins in an ATP-dependent manner without itself being part of a final effector complex. The sequence is that of DNA mismatch repair protein MutL from Mannheimia succiniciproducens (strain KCTC 0769BP / MBEL55E).